The chain runs to 116 residues: Cocaine- and amphetamine-regulated transcript protein (116 aa).

Residues M1–A27 form the signal peptide. Y41 carries the phosphotyrosine modification. A Phosphoserine modification is found at S48. Cystine bridges form between C82-C100, C88-C108, and C102-C115.

Belongs to the CART family.

It localises to the secreted. Satiety factor closely associated with the actions of leptin and neuropeptide y; this anorectic peptide inhibits both normal and starvation-induced feeding and completely blocks the feeding response induced by neuropeptide Y and regulated by leptin in the hypothalamus. The protein is Cocaine- and amphetamine-regulated transcript protein (CARTPT) of Bos taurus (Bovine).